A 258-amino-acid polypeptide reads, in one-letter code: Ciliogenesis and planar polarity effector 2 (258 aa).

Residues 51 to 258 form a small GTPase-like region; that stretch reads IDTASYKIFV…LPSSPESAPG (208 aa). Ser-64, Gly-65, Gly-67, Lys-68, Thr-69, Ala-70, Ile-82, His-84, Thr-87, Lys-176, Asp-178, and Ser-206 together coordinate GTP.

Belongs to the small GTPase superfamily. Rab family. Interacts with FUZ. Associates with the CPLANE (ciliogenesis and planar polarity effectors) complex via its interaction with FUZ.

It is found in the cytoplasm. Its subcellular location is the cytoskeleton. The protein resides in the cilium basal body. The protein localises to the microtubule organizing center. It localises to the centrosome. It is found in the centriole. In terms of biological role, required for efficient primary cilia initiation, regulating a late step in cilia initiation. Plays a role in the final maturation of the mother centriole and ciliary vesicle that allows extension of the ciliary axoneme. The chain is Ciliogenesis and planar polarity effector 2 (Cplane2) from Mus musculus (Mouse).